The following is a 354-amino-acid chain: Myosin-binding protein H-like (354 aa).

A disordered region spans residues 1 to 47 (MEAATAPEVAAGSKLKVKEASPADAEPPQASPGQGAGSPTPQLLPPI). S38 carries the post-translational modification Phosphoserine. One can recognise an Ig-like C2-type 1 domain in the interval 45 to 139 (PPIEEHPKIW…GGLEATATID (95 aa)). One can recognise a Fibronectin type-III domain in the interval 148 to 238 (PPQSIKLVDV…ETAPITTDLA (91 aa)). Residues 261–345 (PKFTQPLADC…VNPLGEASVD (85 aa)) enclose the Ig-like C2-type 2 domain. Residues C282 and C333 are joined by a disulfide bond. R321 is subject to Omega-N-methylarginine.

Belongs to the immunoglobulin superfamily. MyBP family. As to expression, expressed in heart, with higher expression in the atria. Expressed in left atrium and ventricle, arteria mammaria interna and skeletal muscle. In terms of tissue distribution, expressed specifically en the left atrium.

Its subcellular location is the cytoplasm. The protein localises to the myofibril. It localises to the sarcomere. In terms of biological role, myosin-binding protein which plays a role in cardiac function. Seems to regulate conduction in the atria and ventricular conduction systems. This is Myosin-binding protein H-like from Homo sapiens (Human).